Consider the following 625-residue polypeptide: 1-deoxy-D-xylulose-5-phosphate synthase (625 aa).

Residues His74 and 115–117 each bind thiamine diphosphate; that span reads GHS. Mg(2+) is bound at residue Asp146. Residues 147–148, Asn175, Tyr286, and Glu367 contribute to the thiamine diphosphate site; that span reads GA. Asn175 is a Mg(2+) binding site.

Belongs to the transketolase family. DXPS subfamily. In terms of assembly, homodimer. Requires Mg(2+) as cofactor. Thiamine diphosphate is required as a cofactor.

It catalyses the reaction D-glyceraldehyde 3-phosphate + pyruvate + H(+) = 1-deoxy-D-xylulose 5-phosphate + CO2. It participates in metabolic intermediate biosynthesis; 1-deoxy-D-xylulose 5-phosphate biosynthesis; 1-deoxy-D-xylulose 5-phosphate from D-glyceraldehyde 3-phosphate and pyruvate: step 1/1. Catalyzes the acyloin condensation reaction between C atoms 2 and 3 of pyruvate and glyceraldehyde 3-phosphate to yield 1-deoxy-D-xylulose-5-phosphate (DXP). This is 1-deoxy-D-xylulose-5-phosphate synthase from Lachnoclostridium phytofermentans (strain ATCC 700394 / DSM 18823 / ISDg) (Clostridium phytofermentans).